Here is a 376-residue protein sequence, read N- to C-terminus: Probable cysteine protease RDL3 (376 aa).

Positions 1–27 (MAISFRTLALLTLSVLLISISLGVVTA) are cleaved as a signal peptide. The propeptide at 28–126 (TESQRNEGEV…ERYQYKEGDV (99 aa)) is activation peptide. N-linked (GlcNAc...) asparagine glycosylation is present at N80. Intrachain disulfides connect C149–C192 and C183–C226. C152 is a catalytic residue. N270 carries N-linked (GlcNAc...) asparagine glycosylation. A disulfide bridge connects residues C283 and C336. Active-site residues include H290 and N311. N349 carries N-linked (GlcNAc...) asparagine glycosylation.

This sequence belongs to the peptidase C1 family. In terms of tissue distribution, expressed in root hairs.

Its function is as follows. Probable thiol protease. The sequence is that of Probable cysteine protease RDL3 from Arabidopsis thaliana (Mouse-ear cress).